Here is a 180-residue protein sequence, read N- to C-terminus: NAD(P)H-quinone oxidoreductase subunit I, chloroplastic (180 aa).

2 consecutive 4Fe-4S ferredoxin-type domains span residues Gly-55–Lys-84 and Leu-95–Glu-124. The [4Fe-4S] cluster site is built by Cys-64, Cys-67, Cys-70, Cys-74, Cys-104, Cys-107, Cys-110, and Cys-114.

Belongs to the complex I 23 kDa subunit family. NDH is composed of at least 16 different subunits, 5 of which are encoded in the nucleus. The cofactor is [4Fe-4S] cluster.

Its subcellular location is the plastid. The protein localises to the chloroplast thylakoid membrane. The catalysed reaction is a plastoquinone + NADH + (n+1) H(+)(in) = a plastoquinol + NAD(+) + n H(+)(out). It catalyses the reaction a plastoquinone + NADPH + (n+1) H(+)(in) = a plastoquinol + NADP(+) + n H(+)(out). Its function is as follows. NDH shuttles electrons from NAD(P)H:plastoquinone, via FMN and iron-sulfur (Fe-S) centers, to quinones in the photosynthetic chain and possibly in a chloroplast respiratory chain. The immediate electron acceptor for the enzyme in this species is believed to be plastoquinone. Couples the redox reaction to proton translocation, and thus conserves the redox energy in a proton gradient. The polypeptide is NAD(P)H-quinone oxidoreductase subunit I, chloroplastic (Nandina domestica (Heavenly bamboo)).